Here is a 101-residue protein sequence, read N- to C-terminus: Protein Tat (101 aa).

Residues 1-24 are interaction with human CREBBP; that stretch reads MEPVDPNLEPWKHPGSQPRTACNN. Residues 1 to 48 form a transactivation region; it reads MEPVDPNLEPWKHPGSQPRTACNNCYCKKCCFHCYACFTRKGLGISYG. Zn(2+)-binding residues include cysteine 22, cysteine 25, and cysteine 27. Residues 22–37 form a cysteine-rich region; that stretch reads CNNCYCKKCCFHCYAC. Lysine 28 is subject to N6-acetyllysine; by host PCAF. Zn(2+) contacts are provided by cysteine 30, histidine 33, cysteine 34, and cysteine 37. Residues 38–48 form a core region; that stretch reads FTRKGLGISYG. Basic residues predominate over residues 48–57; sequence GRKKRRQRRR. The disordered stretch occupies residues 48–101; it reads GRKKRRQRRRAPQDSQTHQASLSKQPASQSRGDPTGPTESKKKVERETETDPFD. The short motif at 49 to 57 is the Nuclear localization signal, RNA-binding (TAR), and protein transduction element; the sequence is RKKRRQRRR. The interaction with the host capping enzyme RNGTT stretch occupies residues 49 to 86; sequence RKKRRQRRRAPQDSQTHQASLSKQPASQSRGDPTGPTE. Residues lysine 50 and lysine 51 each carry the N6-acetyllysine; by host EP300 and GCN5L2 modification. Asymmetric dimethylarginine; by host PRMT6 is present on residues arginine 52 and arginine 53. Polar residues predominate over residues 60–79; sequence QDSQTHQASLSKQPASQSRG. Lysine 71 participates in a covalent cross-link: Glycyl lysine isopeptide (Lys-Gly) (interchain with G-Cter in ubiquitin). A Cell attachment site motif is present at residues 78-80; it reads RGD. Basic and acidic residues predominate over residues 86–101; that stretch reads ESKKKVERETETDPFD.

This sequence belongs to the lentiviruses Tat family. Interacts with host CCNT1. Associates with the P-TEFb complex composed at least of Tat, P-TEFb (CDK9 and CCNT1), TAR RNA, RNA Pol II. Recruits the HATs CREBBP, TAF1/TFIID, EP300, PCAF and GCN5L2. Interacts with host KAT5/Tip60; this interaction targets the latter to degradation. Interacts with the host deacetylase SIRT1. Interacts with host capping enzyme RNGTT; this interaction stimulates RNGTT. Binds to host KDR, and to the host integrins ITGAV/ITGB3 and ITGA5/ITGB1. Interacts with host KPNB1/importin beta-1 without previous binding to KPNA1/importin alpha-1. Interacts with EIF2AK2. Interacts with host nucleosome assembly protein NAP1L1; this interaction may be required for the transport of Tat within the nucleus, since the two proteins interact at the nuclear rim. Interacts with host C1QBP/SF2P32; this interaction involves lysine-acetylated Tat. Interacts with the host chemokine receptors CCR2, CCR3 and CXCR4. Interacts with host DPP4/CD26; this interaction may trigger an anti-proliferative effect. Interacts with host LDLR. Interacts with the host extracellular matrix metalloproteinase MMP1. Interacts with host PRMT6; this interaction mediates Tat's methylation. Interacts with, and is ubiquitinated by MDM2/Hdm2. Interacts with host PSMC3 and HTATIP2. Interacts with STAB1; this interaction may overcome SATB1-mediated repression of IL2 and IL2RA (interleukin) in T cells by binding to the same domain than HDAC1. Interacts (when acetylated) with human CDK13, thereby increasing HIV-1 mRNA splicing and promoting the production of the doubly spliced HIV-1 protein Nef. Interacts with host TBP; this interaction modulates the activity of transcriptional pre-initiation complex. Interacts with host RELA. Interacts with host PLSCR1; this interaction negatively regulates Tat transactivation activity by altering its subcellular distribution. In terms of processing, asymmetrical arginine methylation by host PRMT6 seems to diminish the transactivation capacity of Tat and affects the interaction with host CCNT1. Post-translationally, acetylation by EP300, CREBBP, GCN5L2/GCN5 and PCAF regulates the transactivation activity of Tat. EP300-mediated acetylation of Lys-50 promotes dissociation of Tat from the TAR RNA through the competitive binding to PCAF's bromodomain. In addition, the non-acetylated Tat's N-terminus can also interact with PCAF. PCAF-mediated acetylation of Lys-28 enhances Tat's binding to CCNT1. Lys-50 is deacetylated by SIRT1. Polyubiquitination by host MDM2 does not target Tat to degradation, but activates its transactivation function and fosters interaction with CCNT1 and TAR RNA. In terms of processing, phosphorylated by EIF2AK2 on serine and threonine residues adjacent to the basic region important for TAR RNA binding and function. Phosphorylation of Tat by EIF2AK2 is dependent on the prior activation of EIF2AK2 by dsRNA.

The protein resides in the host nucleus. Its subcellular location is the host nucleolus. The protein localises to the host cytoplasm. It is found in the secreted. Functionally, transcriptional activator that increases RNA Pol II processivity, thereby increasing the level of full-length viral transcripts. Recognizes a hairpin structure at the 5'-LTR of the nascent viral mRNAs referred to as the transactivation responsive RNA element (TAR) and recruits the cyclin T1-CDK9 complex (P-TEFb complex) that will in turn hyperphosphorylate the RNA polymerase II to allow efficient elongation. The CDK9 component of P-TEFb and other Tat-activated kinases hyperphosphorylate the C-terminus of RNA Pol II that becomes stabilized and much more processive. Other factors such as HTATSF1/Tat-SF1, SUPT5H/SPT5, and HTATIP2 are also important for Tat's function. Besides its effect on RNA Pol II processivity, Tat induces chromatin remodeling of proviral genes by recruiting the histone acetyltransferases (HATs) CREBBP, EP300 and PCAF to the chromatin. This also contributes to the increase in proviral transcription rate, especially when the provirus integrates in transcriptionally silent region of the host genome. To ensure maximal activation of the LTR, Tat mediates nuclear translocation of NF-kappa-B by interacting with host RELA. Through its interaction with host TBP, Tat may also modulate transcription initiation. Tat can reactivate a latently infected cell by penetrating in it and transactivating its LTR promoter. In the cytoplasm, Tat is thought to act as a translational activator of HIV-1 mRNAs. In terms of biological role, extracellular circulating Tat can be endocytosed by surrounding uninfected cells via the binding to several surface receptors such as CD26, CXCR4, heparan sulfate proteoglycans (HSPG) or LDLR. Neurons are rarely infected, but they internalize Tat via their LDLR. Through its interaction with nuclear HATs, Tat is potentially able to control the acetylation-dependent cellular gene expression. Modulates the expression of many cellular genes involved in cell survival, proliferation or in coding for cytokines or cytokine receptors. Tat plays a role in T-cell and neurons apoptosis. Tat induced neurotoxicity and apoptosis probably contribute to neuroAIDS. Circulating Tat also acts as a chemokine-like and/or growth factor-like molecule that binds to specific receptors on the surface of the cells, affecting many cellular pathways. In the vascular system, Tat binds to ITGAV/ITGB3 and ITGA5/ITGB1 integrins dimers at the surface of endothelial cells and competes with bFGF for heparin-binding sites, leading to an excess of soluble bFGF. The protein is Protein Tat of Homo sapiens (Human).